We begin with the raw amino-acid sequence, 295 residues long: Pyridoxal 5'-phosphate synthase subunit PdxS (295 aa).

Aspartate 23 is a D-ribose 5-phosphate binding site. The active-site Schiff-base intermediate with D-ribose 5-phosphate is the lysine 80. Residue glycine 152 participates in D-ribose 5-phosphate binding. Arginine 164 is a D-glyceraldehyde 3-phosphate binding site. D-ribose 5-phosphate is bound by residues glycine 213 and 234-235; that span reads GS.

Belongs to the PdxS/SNZ family. In terms of assembly, in the presence of PdxT, forms a dodecamer of heterodimers.

It carries out the reaction aldehydo-D-ribose 5-phosphate + D-glyceraldehyde 3-phosphate + L-glutamine = pyridoxal 5'-phosphate + L-glutamate + phosphate + 3 H2O + H(+). It participates in cofactor biosynthesis; pyridoxal 5'-phosphate biosynthesis. Functionally, catalyzes the formation of pyridoxal 5'-phosphate from ribose 5-phosphate (RBP), glyceraldehyde 3-phosphate (G3P) and ammonia. The ammonia is provided by the PdxT subunit. Can also use ribulose 5-phosphate and dihydroxyacetone phosphate as substrates, resulting from enzyme-catalyzed isomerization of RBP and G3P, respectively. This chain is Pyridoxal 5'-phosphate synthase subunit PdxS, found in Methanosphaera stadtmanae (strain ATCC 43021 / DSM 3091 / JCM 11832 / MCB-3).